Reading from the N-terminus, the 201-residue chain is NAD(P)H dehydrogenase (quinone) (201 aa).

A Flavodoxin-like domain is found at 4-191; sequence VLVLYYSMYG…KIAKCQGVHV (188 aa). FMN contacts are provided by residues 10-15 and 79-81; these read SMYGHV and TRF. Residue tyrosine 12 participates in NAD(+) binding. Substrate is bound at residue tryptophan 99. FMN is bound by residues 114 to 120 and histidine 135; that span reads STGTQHG.

This sequence belongs to the WrbA family. Requires FMN as cofactor.

It carries out the reaction a quinone + NADH + H(+) = a quinol + NAD(+). The enzyme catalyses a quinone + NADPH + H(+) = a quinol + NADP(+). In Hydrogenovibrio crunogenus (strain DSM 25203 / XCL-2) (Thiomicrospira crunogena), this protein is NAD(P)H dehydrogenase (quinone).